Here is a 428-residue protein sequence, read N- to C-terminus: 3-phosphoshikimate 1-carboxyvinyltransferase (428 aa).

3-phosphoshikimate is bound by residues lysine 23, serine 24, and arginine 28. Lysine 23 contacts phosphoenolpyruvate. Glycine 97 and arginine 125 together coordinate phosphoenolpyruvate. Positions 170, 171, 172, 198, 314, 337, and 341 each coordinate 3-phosphoshikimate. Glutamine 172 lines the phosphoenolpyruvate pocket. Residue aspartate 314 is the Proton acceptor of the active site. Residues arginine 345, arginine 387, and lysine 412 each contribute to the phosphoenolpyruvate site.

This sequence belongs to the EPSP synthase family. Monomer.

The protein localises to the cytoplasm. The enzyme catalyses 3-phosphoshikimate + phosphoenolpyruvate = 5-O-(1-carboxyvinyl)-3-phosphoshikimate + phosphate. It participates in metabolic intermediate biosynthesis; chorismate biosynthesis; chorismate from D-erythrose 4-phosphate and phosphoenolpyruvate: step 6/7. Catalyzes the transfer of the enolpyruvyl moiety of phosphoenolpyruvate (PEP) to the 5-hydroxyl of shikimate-3-phosphate (S3P) to produce enolpyruvyl shikimate-3-phosphate and inorganic phosphate. The chain is 3-phosphoshikimate 1-carboxyvinyltransferase from Yersinia pestis bv. Antiqua (strain Antiqua).